Consider the following 273-residue polypeptide: NH(3)-dependent NAD(+) synthetase (273 aa).

46–53 lines the ATP pocket; sequence GISGGQDS. Asp-52 lines the Mg(2+) pocket. Arg-139 lines the deamido-NAD(+) pocket. Thr-159 contributes to the ATP binding site. Glu-164 contacts Mg(2+). Deamido-NAD(+) is bound by residues Lys-172 and Asp-179. Residues Lys-188 and Thr-210 each coordinate ATP. A deamido-NAD(+)-binding site is contributed by 259–260; sequence HK.

It belongs to the NAD synthetase family. As to quaternary structure, homodimer.

The catalysed reaction is deamido-NAD(+) + NH4(+) + ATP = AMP + diphosphate + NAD(+) + H(+). It functions in the pathway cofactor biosynthesis; NAD(+) biosynthesis; NAD(+) from deamido-NAD(+) (ammonia route): step 1/1. Its function is as follows. Catalyzes the ATP-dependent amidation of deamido-NAD to form NAD. Uses ammonia as a nitrogen source. The protein is NH(3)-dependent NAD(+) synthetase of Streptococcus thermophilus (strain ATCC BAA-250 / LMG 18311).